Here is a 202-residue protein sequence, read N- to C-terminus: METIVLGVAPREIKKNAAGKLRKTGEVPAVVYHKGEATIAVSVNEIALNKLVHSAESHIIDLKFPDGNVKRSFIKDVQFDPVTDRVIHTDFQLVSANEVIEMDVPVAVEGDAIGVEKGGKLQIIRHSLTVKGKPGDMPAHVTIDVTALEIGHSIHVREIPATAFPGLEIMDDRDTPVVTVLASKKEAEATEAVAGATPEGAA.

This sequence belongs to the bacterial ribosomal protein bL25 family. CTC subfamily. As to quaternary structure, part of the 50S ribosomal subunit; part of the 5S rRNA/L5/L18/L25 subcomplex. Contacts the 5S rRNA. Binds to the 5S rRNA independently of L5 and L18.

Its function is as follows. This is one of the proteins that binds to the 5S RNA in the ribosome where it forms part of the central protuberance. This Chlorobium luteolum (strain DSM 273 / BCRC 81028 / 2530) (Pelodictyon luteolum) protein is Large ribosomal subunit protein bL25.